Here is a 155-residue protein sequence, read N- to C-terminus: Ribonuclease H (155 aa).

An RNase H type-1 domain is found at 1–142 (MLKQVEIFTD…CDELARAAAM (142 aa)). Aspartate 10, glutamate 48, aspartate 70, and aspartate 134 together coordinate Mg(2+).

It belongs to the RNase H family. As to quaternary structure, monomer. Mg(2+) is required as a cofactor.

It is found in the cytoplasm. It carries out the reaction Endonucleolytic cleavage to 5'-phosphomonoester.. Its function is as follows. Endonuclease that specifically degrades the RNA of RNA-DNA hybrids. This Escherichia coli O127:H6 (strain E2348/69 / EPEC) protein is Ribonuclease H.